The sequence spans 576 residues: MDAFATSPTSALIKAVNCIAHVTPMAGEDSSENRRASNYKPSSWDYEFLQSLATSHNTAQEKHMKMAEKLKEEVKSMIKGQMEPVAKLELINIVQRLGLKYRFESEIKEELLSLYKDGTDAWWVDNLHATALRFRLLRENGIFVPQDVFETFKDKSGKFKSQLCKDVRGLLSLYEASYLGWEGEDLLDEAKKFSTTNLNNVKESISSNTLGRLVKHALNLPLHWSAARYEARWFIDEYEKEENVNPNLLKYAKFDFNIVQSIHQRELGNLARWWVETGLDKLSFVRNTLMQNFMWGCAMVFEPQYGKVRDAAVKQASLIAMVDDVYDVYGSLEELEIFTDIVDRWDITGIDKLPRNISMILLTMFNTANQIGYDLLRDRGFNGIPHIAQAWATLCKKYLKEAKWYHSGYKPTLEEYLENGLVSISFVLSLVTAYLQTETLENLTYESAAYVNSVPPLVRYSGLLNRLYNDLGTSSAEIARGDTLKSIQCYMTQTGATEEAAREHIKGLVHEAWKGMNKCLFEQTPFAEPFVGFNVNTVRGSQFFYQHGDGYAVTESWTKDLSLSVLIHPIPLNEED.

Residues arginine 286, aspartate 323, aspartate 327, arginine 466, and asparagine 469 each coordinate (2E)-geranyl diphosphate. The Mg(2+) site is built by aspartate 323 and aspartate 327. The DDXXD motif signature appears at 323 to 327 (DDVYD). Mg(2+)-binding residues include asparagine 469, threonine 473, and glutamate 477.

The protein belongs to the terpene synthase family. Tpsb subfamily. Requires Mg(2+) as cofactor. Mn(2+) serves as cofactor.

The catalysed reaction is (2E,6E)-farnesyl diphosphate = beta-bisabolene + diphosphate. It carries out the reaction (2E)-geranyl diphosphate + H2O = (R)-alpha-terpineol + diphosphate. The enzyme catalyses (2E)-geranyl diphosphate = (4S)-limonene + diphosphate. Its pathway is secondary metabolite biosynthesis; terpenoid biosynthesis. Functionally, monoterpene synthase which catalyzes the conversion of (2E)-geranyl diphosphate (GPP) to (R)-alpha-terpineol and (4S)-limonene, as well as small quantities of linalool, myrcene, (-)-alpha-pinene, (+)-sabinene and geraniol. To a lower extent, catalyzes the conversion of (2E,6E)-farnesyl diphosphate (FPP) to beta-bisabolene. This Santalum album (White sandalwood) protein is (+)-alpha-terpineol synthase.